Here is a 388-residue protein sequence, read N- to C-terminus: Spermidine/putrescine import ATP-binding protein PotA (388 aa).

Residues 17-247 enclose the ABC transporter domain; it reads IEIDHVTKRF…PATVFVANFI (231 aa). Residue 49-56 participates in ATP binding; it reads GPSGCGKT.

Belongs to the ABC transporter superfamily. Spermidine/putrescine importer (TC 3.A.1.11.1) family. The complex is composed of two ATP-binding proteins (PotA), two transmembrane proteins (PotB and PotC) and a solute-binding protein (PotD).

The protein localises to the cell membrane. It carries out the reaction ATP + H2O + polyamine-[polyamine-binding protein]Side 1 = ADP + phosphate + polyamineSide 2 + [polyamine-binding protein]Side 1.. Its function is as follows. Part of the ABC transporter complex PotABCD involved in spermidine/putrescine import. Responsible for energy coupling to the transport system. The sequence is that of Spermidine/putrescine import ATP-binding protein PotA from Mycobacterium sp. (strain KMS).